The following is a 1972-amino-acid chain: TP53-binding protein 1 (1972 aa).

Disordered stretches follow at residues 24–273, 290–332, and 346–507; these read DSQP…VAAM, QIQK…CSLA, and GQRS…LGLS. Phosphoserine occurs at positions 25 and 63. The span at 82–91 shows a compositional bias: basic and acidic residues; the sequence is EHLKENKVAD. The segment covering 94–121 has biased composition (polar residues); that stretch reads DSSNLDTCGSISQVIEQLPQPNRTSSVL. Residues Ser105 and Ser124 each carry the phosphoserine modification. The segment covering 138–149 has biased composition (basic and acidic residues); it reads ELEQKEKEKEED. Positions 151–168 are enriched in polar residues; the sequence is SGNTTHSLGAEDTASSQL. Phosphoserine occurs at positions 166, 176, and 178. A compositionally biased stretch (polar residues) spans 195-205; the sequence is LQSVTTNSGYT. A Glycyl lysine isopeptide (Lys-Gly) (interchain with G-Cter in SUMO1); alternate cross-link involves residue Lys217. Lys217 participates in a covalent cross-link: Glycyl lysine isopeptide (Lys-Gly) (interchain with G-Cter in SUMO2); alternate. Ser222, Ser265, and Ser294 each carry phosphoserine. Composition is skewed to polar residues over residues 300 to 322 and 346 to 361; these read LSTQ…CSTP and GQRS…NSSD. Position 302 is a phosphothreonine (Thr302). Ser366, Ser380, Ser395, Ser398, Ser429, Ser452, and Ser464 each carry phosphoserine. Residues 426 to 441 show a composition bias toward polar residues; sequence STVSPQASTPISQSTP. Residues 442-452 show a composition bias toward pro residues; the sequence is VFPPGSLPIPS. Residues 481-490 are compositionally biased toward polar residues; that stretch reads HSSSLTVECS. Positions 491 to 501 are enriched in basic and acidic residues; it reads KTSEIEPKNSP. Ser500, Ser507, Ser518, Ser523, and Ser525 each carry phosphoserine. The segment covering 520–531 has biased composition (polar residues); sequence SEYSQSPKMESL. The segment at 520–556 is disordered; the sequence is SEYSQSPKMESLSSHRIDEDGENTQIEDTEPMSPVLN. Residues 538–549 show a composition bias toward acidic residues; sequence EDGENTQIEDTE. Phosphothreonine occurs at positions 543 and 548. Phosphoserine occurs at positions 552, 566, and 580. The tract at residues 568 to 595 is disordered; that stretch reads LMNPAQDGEVQLSQNDDKTKGDDTDTRD. A compositionally biased stretch (basic and acidic residues) spans 582 to 595; it reads NDDKTKGDDTDTRD. Phosphoserine occurs at positions 630, 635, 639, and 640. Residues 649–687 are disordered; the sequence is EIKEHHPEEGSSGSEVEEIPETPCESQGEELKEENMESV. At Thr670 the chain carries Phosphothreonine. Residues Ser692, Ser724, Ser727, Ser771, Ser809, Ser830, Ser831, and Ser834 each carry the phosphoserine modification. A disordered region spans residues 742–911; sequence EQEAWEEATS…TPFHFTLPKE (170 aa). Residues 798–816 are compositionally biased toward basic and acidic residues; the sequence is AENRLDTKEEKSVEYEGDL. Over residues 839–848 the composition is skewed to basic and acidic residues; the sequence is RADDPLRLDQ. The span at 849–864 shows a compositional bias: polar residues; sequence ELQQPQTQEKTSNSLT. Position 855 is a phosphothreonine (Thr855). Lys868 is covalently cross-linked (Glycyl lysine isopeptide (Lys-Gly) (interchain with G-Cter in SUMO1); alternate). Lys868 participates in a covalent cross-link: Glycyl lysine isopeptide (Lys-Gly) (interchain with G-Cter in SUMO2); alternate. The span at 890–902 shows a compositional bias: polar residues; the sequence is HASQSFCESSSET. Phosphothreonine is present on Thr922. Lys930 participates in a covalent cross-link: Glycyl lysine isopeptide (Lys-Gly) (interchain with G-Cter in SUMO2). 2 positions are modified to phosphoserine: Ser970 and Ser975. Lys984 is covalently cross-linked (Glycyl lysine isopeptide (Lys-Gly) (interchain with G-Cter in SUMO2)). 2 disordered regions span residues 997–1028 and 1045–1103; these read EASE…SVAS and ENEA…VSPA. Positions 1018-1028 are enriched in polar residues; sequence GSTAVAESVAS. At Ser1028 the chain carries Phosphoserine. Thr1056 is modified (phosphothreonine). Phosphoserine is present on Ser1068. Residues 1071–1083 show a composition bias toward basic and acidic residues; that stretch reads EEEKEKLEGDHTI. 4 positions are modified to phosphoserine: Ser1086, Ser1094, Ser1101, and Ser1114. The span at 1127–1139 shows a compositional bias: basic and acidic residues; that stretch reads DQKEGRSTNKENP. Disordered stretches follow at residues 1127–1148, 1188–1232, and 1269–1478; these read DQKE…ERPS, NFGK…QPPH, and VTEE…DGLD. The residue at position 1148 (Ser1148) is a Phosphoserine. Positions 1188–1200 are enriched in polar residues; that stretch reads NFGKQDATVQTER. A Phosphothreonine modification is found at Thr1214. Phosphoserine occurs at positions 1216 and 1219. Over residues 1272 to 1285 the composition is skewed to acidic residues; the sequence is ETEEPIVECQECET. Composition is skewed to low complexity over residues 1298 to 1307 and 1316 to 1329; these read DLGDISSFSS and SSGT…SSGS. Phosphoserine occurs at positions 1317 and 1342. Arg1355 is modified (omega-N-methylarginine). Residue Ser1362 is modified to Phosphoserine. Lys1365 participates in a covalent cross-link: Glycyl lysine isopeptide (Lys-Gly) (interchain with G-Cter in SUMO2). Ser1368 is modified (phosphoserine). Thr1372 bears the Phosphothreonine mark. The short motif at 1396–1403 is the GAR element; the sequence is RGRGRRGR. Phosphoserine is present on residues Ser1426 and Ser1430. Lys1434 participates in a covalent cross-link: Glycyl lysine isopeptide (Lys-Gly) (interchain with G-Cter in SUMO1); alternate. Lys1434 participates in a covalent cross-link: Glycyl lysine isopeptide (Lys-Gly) (interchain with G-Cter in SUMO2); alternate. Ser1460, Ser1462, and Ser1474 each carry phosphoserine. Residues 1484–1603 form a tudor-like region; it reads NSFVGLRVVA…NRLREQYGLG (120 aa). The segment at 1495–1523 is interaction with dimethylated histone H4; that stretch reads WSSNGYFYSGKITRDVGAGKYKLLFDDGY. Lys1563 participates in a covalent cross-link: Glycyl lysine isopeptide (Lys-Gly) (interchain with G-Cter in SUMO1); alternate. Residue Lys1563 forms a Glycyl lysine isopeptide (Lys-Gly) (interchain with G-Cter in SUMO2); alternate linkage. Residues 1604-1631 carry the UDR motif; that stretch reads PYEAVTPLTKAADISLDNLVEGKRKRRS. Thr1609 carries the phosphothreonine modification. Phosphoserine is present on residues Ser1618, Ser1631, and Ser1635. 2 disordered regions span residues 1622-1719 and 1745-1768; these read LVEG…EEQR and LASR…FLEI. Low complexity predominate over residues 1634–1650; sequence SSPATPTASSSSSTTPT. 2 positions are modified to phosphothreonine: Thr1638 and Thr1648. A phosphoserine mark is found at Ser1656, Ser1673, and Ser1678. A Glycyl lysine isopeptide (Lys-Gly) (interchain with G-Cter in ubiquitin) cross-link involves residue Lys1685. Residues Ser1701, Ser1759, and Ser1778 each carry the phosphoserine modification. BRCT domains lie at 1724–1848 and 1864–1964; these read LNKT…NYLL and PREN…QHPK.

As to quaternary structure, homoligomer. Interacts with p53/TP53 (via the central domain). Interacts with DCLRE1C. Interacts with histone H2AX and this requires phosphorylation of H2AX on 'Ser-139'. Interacts with histone H4 that has been dimethylated at 'Lys-20' (H4K20me2). Has low affinity for histone H4 containing monomethylated 'Lys-20' (H4K20me1). Does not bind histone H4 containing unmethylated or trimethylated 'Lys-20' (H4K20me3). Has low affinity for histone H3 that has been dimethylated on 'Lys-79'. Has very low affinity for histone H3 that has been monomethylated on 'Lys-79' (in vitro). Does not bind unmethylated histone H3. Interacts with histone H2A monoubiquitinated at 'Lys-15' (H2AK15Ub). Interacts with PWWP3A/EXPAND1. Interacts with CHEK2; modulates CHEK2 phosphorylation at 'Thr-68' in response to infrared. Interacts with MSL1; this interaction may be required for MSL1 DNA repair activity, but not for histone acetyltransferase activity. Interacts (when phosphorylated by ATM) with RIF1. Interacts (via the Tudor-like domain) with NUDT16L1/TIRR; interaction masks the Tudor-like domain and prevents recruitment to chromatin. Interacts with PAXIP1. Interacts with SHLD2. Interacts (when phosphorylated) with TOPBP1. Interacts with GFI1; promoting methylation by PRMT1. Interacts with (phosphorylated) DYNLL1; specifically binds DYNLL1 phosphorylated at 'Ser-88' and promotes its recruitment to double stand breaks (DSBs). (Microbial infection) Interacts (via C-terminus) with Epstein-Barr virus lytic switch protein BZLF1 (via C-terminus); this interaction is involved in the activation of the viral lytic cycle. Asymmetrically dimethylated on Arg residues by PRMT1. Methylation is required for DNA binding. In terms of processing, phosphorylated at basal level in the absence of DNA damage. Phosphorylated by ATM in response to DNA damage: phosphorylation at different sites promotes interaction with different set of proteins: phosphorylation at the N-terminus by ATM (residues from 6-178) promotes interaction with PAXIP1 and non-homologous end joining (NHEJ) of dysfunctional telomeres. Phosphorylation by ATM at residues that are located more C-terminus (residues 300-650) leads to promote interaction with RIF1. Interaction with RIF1 leads to disrupt interaction with NUDT16L1/TIRR. Phosphorylation at Thr-1609 and Ser-1618 in the UDR motif blocks interaction with H2AK15ub. Dephosphorylated by PPP4C. Hyperphosphorylation during mitosis correlates with its exclusion from chromatin and DNA lesions. Hyperphosphorylated in an ATR-dependent manner in response to DNA damage induced by UV irradiation. Dephosphorylated by PPP5C. Phosphorylation at Ser-366 and Thr-670 promotes interaction with TOPBP1. Phosphorylated by VRK1. Post-translationally, monoubiquitinated at Lys-1685 by MSL2 is reponse to DNA damage, leading to its stabilization.

Its subcellular location is the nucleus. It is found in the chromosome. It localises to the centromere. The protein resides in the kinetochore. In terms of biological role, double-strand break (DSB) repair protein involved in response to DNA damage, telomere dynamics and class-switch recombination (CSR) during antibody genesis. Plays a key role in the repair of double-strand DNA breaks (DSBs) in response to DNA damage by promoting non-homologous end joining (NHEJ)-mediated repair of DSBs and specifically counteracting the function of the homologous recombination (HR) repair protein BRCA1. In response to DSBs, phosphorylation by ATM promotes interaction with RIF1 and dissociation from NUDT16L1/TIRR, leading to recruitment to DSBs sites. Recruited to DSBs sites by recognizing and binding histone H2A monoubiquitinated at 'Lys-15' (H2AK15Ub) and histone H4 dimethylated at 'Lys-20' (H4K20me2), two histone marks that are present at DSBs sites. Required for immunoglobulin class-switch recombination (CSR) during antibody genesis, a process that involves the generation of DNA DSBs. Participates in the repair and the orientation of the broken DNA ends during CSR. In contrast, it is not required for classic NHEJ and V(D)J recombination. Promotes NHEJ of dysfunctional telomeres via interaction with PAXIP1. In Homo sapiens (Human), this protein is TP53-binding protein 1.